A 473-amino-acid polypeptide reads, in one-letter code: GTPase Der (473 aa).

EngA-type G domains follow at residues 3–167 and 203–378; these read FKVA…KGLE and LRVA…TFWN. Residues 9-16, 56-60, 119-122, 209-216, 256-260, and 321-324 each bind GTP; these read GRPNVGKS, DTAGL, NKCE, DTAGM, and NKWD. Residues 379–463 form the KH-like domain; that stretch reads ARVPTARLNR…PIRLFMRKTH (85 aa).

This sequence belongs to the TRAFAC class TrmE-Era-EngA-EngB-Septin-like GTPase superfamily. EngA (Der) GTPase family. In terms of assembly, associates with the 50S ribosomal subunit.

Its function is as follows. GTPase that plays an essential role in the late steps of ribosome biogenesis. This Parvibaculum lavamentivorans (strain DS-1 / DSM 13023 / NCIMB 13966) protein is GTPase Der.